The sequence spans 358 residues: 3-dehydroquinate synthase (358 aa).

NAD(+) contacts are provided by residues 70–75 (DGEAHK), 104–108 (GVIGD), 128–129 (TT), K141, and K150. Positions 183, 246, and 263 each coordinate Zn(2+).

This sequence belongs to the sugar phosphate cyclases superfamily. Dehydroquinate synthase family. The cofactor is NAD(+). Co(2+) is required as a cofactor. Zn(2+) serves as cofactor.

The protein resides in the cytoplasm. It carries out the reaction 7-phospho-2-dehydro-3-deoxy-D-arabino-heptonate = 3-dehydroquinate + phosphate. Its pathway is metabolic intermediate biosynthesis; chorismate biosynthesis; chorismate from D-erythrose 4-phosphate and phosphoenolpyruvate: step 2/7. Its function is as follows. Catalyzes the conversion of 3-deoxy-D-arabino-heptulosonate 7-phosphate (DAHP) to dehydroquinate (DHQ). This Bordetella bronchiseptica (strain ATCC BAA-588 / NCTC 13252 / RB50) (Alcaligenes bronchisepticus) protein is 3-dehydroquinate synthase.